We begin with the raw amino-acid sequence, 358 residues long: Alternative oxidase, mitochondrial (358 aa).

Residues 152–172 traverse the membrane as a helical segment; the sequence is LIRMVFLESVAGVPGMVAGML. Fe cation-binding residues include Glu-159, Glu-198, and His-201. A helical membrane pass occupies residues 217-237; that stretch reads FMIIGAQGVFFNSMFLSYLIS. Fe cation is bound by residues Glu-249, Glu-250, Glu-306, and His-309.

This sequence belongs to the alternative oxidase family. It depends on Fe cation as a cofactor.

It localises to the mitochondrion inner membrane. Catalyzes cyanide-resistant oxygen consumption. May increase respiration when the cytochrome respiratory pathway is restricted, or in response to low temperatures. The chain is Alternative oxidase, mitochondrial from Blumeria graminis (Powdery mildew).